We begin with the raw amino-acid sequence, 257 residues long: Acetylglutamate kinase (257 aa).

Residues 43–44 (GG), Arg-65, and Asn-157 each bind substrate.

The protein belongs to the acetylglutamate kinase family. ArgB subfamily.

The protein localises to the cytoplasm. It catalyses the reaction N-acetyl-L-glutamate + ATP = N-acetyl-L-glutamyl 5-phosphate + ADP. The protein operates within amino-acid biosynthesis; L-arginine biosynthesis; N(2)-acetyl-L-ornithine from L-glutamate: step 2/4. Catalyzes the ATP-dependent phosphorylation of N-acetyl-L-glutamate. This Mannheimia succiniciproducens (strain KCTC 0769BP / MBEL55E) protein is Acetylglutamate kinase.